The sequence spans 31 residues: MSDIN-like toxin proprotein 8 (31 aa).

The propeptide occupies 1–10 (MSDINTARLP). Residues 11–18 (CIGFLGIP) constitute a cross-link (cyclopeptide (Cys-Pro)). Positions 19 to 31 (SVGDDIEMVLRHG) are excised as a propeptide.

Belongs to the MSDIN fungal toxin family. Post-translationally, processed by the macrocyclase-peptidase enzyme POPB to yield a toxic cyclic octapeptide. POPB first removes 10 residues from the N-terminus. Conformational trapping of the remaining peptide forces the enzyme to release this intermediate rather than proceed to macrocyclization. The enzyme rebinds the remaining peptide in a different conformation and catalyzes macrocyclization of the N-terminal 8 residues.

Its function is as follows. Probable toxin that belongs to the MSDIN-like toxin family responsible for a large number of food poisoning cases and deaths. This chain is MSDIN-like toxin proprotein 8, found in Amanita bisporigera (Destroying angel).